A 100-amino-acid polypeptide reads, in one-letter code: Urease subunit gamma (100 aa).

The protein belongs to the urease gamma subunit family. In terms of assembly, heterotrimer of UreA (gamma), UreB (beta) and UreC (alpha) subunits. Three heterotrimers associate to form the active enzyme.

It is found in the cytoplasm. It catalyses the reaction urea + 2 H2O + H(+) = hydrogencarbonate + 2 NH4(+). It participates in nitrogen metabolism; urea degradation; CO(2) and NH(3) from urea (urease route): step 1/1. In Pseudarthrobacter chlorophenolicus (strain ATCC 700700 / DSM 12829 / CIP 107037 / JCM 12360 / KCTC 9906 / NCIMB 13794 / A6) (Arthrobacter chlorophenolicus), this protein is Urease subunit gamma.